The sequence spans 245 residues: Acetylglutamate kinase (245 aa).

Residues 41 to 42, arginine 63, and asparagine 156 contribute to the substrate site; that span reads GG.

The protein belongs to the acetylglutamate kinase family. ArgB subfamily.

The protein localises to the cytoplasm. The enzyme catalyses N-acetyl-L-glutamate + ATP = N-acetyl-L-glutamyl 5-phosphate + ADP. Its pathway is amino-acid biosynthesis; L-arginine biosynthesis; N(2)-acetyl-L-ornithine from L-glutamate: step 2/4. Functionally, catalyzes the ATP-dependent phosphorylation of N-acetyl-L-glutamate. This Streptococcus sanguinis (strain SK36) protein is Acetylglutamate kinase.